The following is a 467-amino-acid chain: Probable amino acid permease 7 (467 aa).

Topologically, residues 1-29 are cytoplasmic; it reads MDIKEDDESRVITPTELQLHDSVTARTGT. A helical membrane pass occupies residues 30-50; sequence LWTAVAHIITGVIGAGVLSLA. Residues 51–58 lie on the Extracellular side of the membrane; sequence WATAELGW. Residues 59 to 79 form a helical membrane-spanning segment; sequence IAGPAALIAFAGVTLLSAFLL. Topologically, residues 80–111 are cytoplasmic; sequence SDCYRFPDPNNGPLRLNSYSQAVKLYLGKKNE. The helical transmembrane segment at 112-132 threads the bilayer; that stretch reads IVCGVVVYISLFGCGIAYTIV. Over 133 to 163 the chain is Extracellular; the sequence is IATCSRAIMKSNCYHRNGHNATCSYGDNNNY. Transmembrane regions (helical) follow at residues 164-184 and 185-205; these read FMVL…FHNM and VWLS…GIGL. The Extracellular portion of the chain corresponds to 206-231; that stretch reads ALGKIIENRKIEGSIRGIPAENRGEK. Residues 232–252 form a helical membrane-spanning segment; that stretch reads VWIVFQALGNIAFSYPFSIIL. The Cytoplasmic portion of the chain corresponds to 253 to 274; the sequence is LEIQDTLRSPPAEKQTMKKAST. A helical membrane pass occupies residues 275 to 295; it reads VAVFIQTFFFFCCGCFGYAAF. The Extracellular portion of the chain corresponds to 296–312; sequence GDSTPGNLLTGFGFYEP. A helical transmembrane segment spans residues 313-333; the sequence is FWLVDFANACIVLHLVGGYQV. Topologically, residues 334–383 are cytoplasmic; the sequence is YSQPIFAAAERSLTKKYPENKFIARFYGFKLPLLRGETVRLNPMRMCLRT. The next 2 membrane-spanning stretches (helical) occupy residues 384 to 404 and 405 to 425; these read MYVL…EVLG and VVGA…MCIL. Residues 426-443 lie on the Cytoplasmic side of the membrane; it reads QKKIRSWTRPWLLLRGFS. Residues 444 to 464 traverse the membrane as a helical segment; sequence FVCLLVCLLSLVGSIYGLVGA. The Extracellular portion of the chain corresponds to 465-467; it reads KFG.

This sequence belongs to the amino acid/polyamine transporter 2 family. Amino acid/auxin permease (AAAP) (TC 2.A.18.2) subfamily.

The protein resides in the cell membrane. In terms of biological role, amino acid-proton symporter. Stereospecific transporter with a broad specificity for neutral amino acids. The protein is Probable amino acid permease 7 (AAP7) of Arabidopsis thaliana (Mouse-ear cress).